The sequence spans 339 residues: Glyceraldehyde-3-phosphate dehydrogenase (339 aa).

NAD(+) contacts are provided by residues 13–14 (RI), aspartate 35, and lysine 84. D-glyceraldehyde 3-phosphate is bound by residues 156 to 158 (SCT), threonine 187, 216 to 217 (TG), and arginine 239. Cysteine 157 serves as the catalytic Nucleophile. Asparagine 321 contacts NAD(+).

Belongs to the glyceraldehyde-3-phosphate dehydrogenase family. Homotetramer.

The protein resides in the cytoplasm. The catalysed reaction is D-glyceraldehyde 3-phosphate + phosphate + NAD(+) = (2R)-3-phospho-glyceroyl phosphate + NADH + H(+). It participates in carbohydrate degradation; glycolysis; pyruvate from D-glyceraldehyde 3-phosphate: step 1/5. The chain is Glyceraldehyde-3-phosphate dehydrogenase from Onchocerca volvulus.